Here is an 86-residue protein sequence, read N- to C-terminus: MANIKSAKKRALQSEKSRKHNASRRTMMRTFIKKVVVAIEAANKEVATAEFVKLQSVLDSYATKGLINKNTAARKKSRLSAKIKAL.

The segment at 1–26 is disordered; sequence MANIKSAKKRALQSEKSRKHNASRRT.

It belongs to the bacterial ribosomal protein bS20 family.

Binds directly to 16S ribosomal RNA. In Psychromonas ingrahamii (strain DSM 17664 / CCUG 51855 / 37), this protein is Small ribosomal subunit protein bS20.